The primary structure comprises 440 residues: 2-methylisoborneol synthase (440 aa).

Disordered stretches follow at residues 1 to 33 (MPDSGTLGTPPPEQGPTPPTTLPDVPAPVIPSA) and 46 to 74 (LHPPVTVPDPAPPPPPAPAAGNPPDTVTG). Composition is skewed to pro residues over residues 9–29 (TPPPEQGPTPPTTLPDVPAPV) and 50–63 (VTVPDPAPPPPPAP). The Mg(2+) site is built by Asp197, Asp198, Glu202, Asn345, Ser349, and Glu353.

The protein belongs to the terpene synthase family. 2-methylisoborneol synthase subfamily. Mg(2+) serves as cofactor.

The catalysed reaction is (E)-2-methylgeranyl diphosphate + H2O = 2-methylisoborneol + diphosphate. Catalyzes the cyclization of 2-methylgeranyl diphosphate (2-MeGPP) to 2-methylisoborneol (2-MIB), which likely involves the intermediacy of 2-methyllinalyl diphosphate. Is also able to catalyze the cyclization of geranyl diphosphate (GPP), albeit with much lower efficiency, leading to the formation of a complex mixture of cyclic monoterpenes, consisting of alpha-pinene (6%), beta-pinene (23%), limonene (32%), gamma-terpinene (29%), and delta-terpinene (10%). The sequence is that of 2-methylisoborneol synthase from Streptomyces coelicolor (strain ATCC BAA-471 / A3(2) / M145).